A 1159-amino-acid chain; its full sequence is Calcium-activated potassium channel subunit alpha-1 (1159 aa).

The Extracellular segment spans residues 1–24 (EPNMDALIIPVTMEVPCDSRGQRM). A helical transmembrane segment spans residues 25–45 (WWAFLASSMVTFFGGLFIILL). Over 46–116 (WRTLKYLWTV…MISAQTLTGR (71 aa)) the chain is Cytoplasmic. Residues C56, C57, and C59 are each lipidated (S-palmitoyl cysteine). Residues 117-137 (VLVVLVFALSIGALVIYFIDS) traverse the membrane as a helical segment. Residues 138-152 (SNPIESCQNFYKDFT) are Extracellular-facing. Residues 153–173 (LQIDMAFNVFFLLYFGLRFIA) form a helical membrane-spanning segment. The Cytoplasmic segment spans residues 174–177 (ANDN). Residues 178-198 (LWFWLEVNSVVDFFTVPPVFV) form a helical membrane-spanning segment. The Extracellular portion of the chain corresponds to 199-202 (SVYL). A helical; Voltage-sensor membrane pass occupies residues 203–223 (NRSWLGLRFLRALRLIQFSEI). The Cytoplasmic portion of the chain corresponds to 224–238 (LQFLNILKTSNSIKL). Residues 239-259 (VNLLSIFISTWLTAAGFIHLV) form a helical membrane-spanning segment. Residues 260 to 273 (ENSGDPWENFQNSQ) lie on the Extracellular side of the membrane. An intramembrane region (pore-forming) is located at residues 274 to 296 (ALTYWECVYLLMVTMSTVGYGDV). The short motif at 290 to 293 (TVGY) is the Selectivity for potassium element. Over 297–305 (YAKTTPGGL) the chain is Extracellular. A helical membrane pass occupies residues 306-326 (FIVFFILGGLAMFASYVPEII). The Cytoplasmic segment spans residues 327-1159 (EIIGNRKKYG…PPIREVEDEC (833 aa)). The 143-residue stretch at 345–487 (RKHIVVCGHI…WNWKEGDDAI (143 aa)) folds into the RCK N-terminal 1 domain. Residues E377, Q400, and E402 each coordinate Mg(2+). The segment at 494-514 (LGFIAQSCLAQGLSTMLANLF) is segment S7. A segment S8 region spans residues 551-571 (LSFPTVCELCFVKLKLLMIAI). Residues 615-619 (CKACH) form a heme-binding motif region. The tract at residues 639 to 668 (EQPSTLSPKKKQRNGGMRNSPSSSPKLMRH) is disordered. Position 643 is a phosphothreonine (T643). Residues S645, S658, and S662 each carry the phosphoserine modification. The tract at residues 717 to 737 (VLSGHVVVCIFGHVSSALIGL) is segment S9. Positions 719-863 (SGHVVVCIFG…MDKSSPDNSP (145 aa)) constitute an RCK N-terminal 2 domain. T850 carries the phosphothreonine modification. A phosphoserine mark is found at S858 and S862. The Calcium bowl motif lies at 883–905 (TELVNDTNVQFLDQDDDDDPDTE). Residues Q892, D895, D898, and D900 each coordinate Ca(2+). The segment at 912–932 (FACGTAFAVSVLDSLMSATYF) is segment S10. The span at 1066–1091 (RASLSHSSHSSQSSSKKSSSVHSIPS) shows a compositional bias: low complexity. A disordered region spans residues 1066–1124 (RASLSHSSHSSQSSSKKSSSVHSIPSTANRQNRPKSRESRDKQTEKKWFTDEPDNAYPR). The span at 1100 to 1115 (KSRESRDKQTEKKWFT) shows a compositional bias: basic and acidic residues. S1101 and S1104 each carry phosphoserine.

It belongs to the potassium channel family. Calcium-activated (TC 1.A.1.3) subfamily. KCa1.1/KCNMA1 sub-subfamily. In terms of assembly, homotetramer; which constitutes the calcium-activated potassium channel. Interacts with beta subunits KCNMB1, KCNMB2, KCNMB3 and KCNMB4. Interacts with gamma subunits LRRC26, LRRC38, LRRC52 and LRRC55. Beta and gamma subunits are accessory, and modulate its activity. Interacts with RAB11B. In terms of processing, phosphorylated. Phosphorylation by kinases such as PKA and/or PKG. In smooth muscles, phosphorylation affects its activity. Palmitoylation by ZDHHC22 and ZDHHC23 within the intracellular linker between the S0 and S1 transmembrane domains regulates localization to the plasma membrane. Depalmitoylated by LYPLA1 and LYPLAL1, leading to retard exit from the trans-Golgi network. Expressed in all vascular and smooth muscles.

Its subcellular location is the cell membrane. It carries out the reaction K(+)(in) = K(+)(out). Its activity is regulated as follows. Ethanol and carbon monoxide-bound heme increase channel activation. Heme inhibits channel activation. Potassium channel activated by both membrane depolarization or increase in cytosolic Ca(2+) that mediates export of K(+). It is also activated by the concentration of cytosolic Mg(2+). Its activation dampens the excitatory events that elevate the cytosolic Ca(2+) concentration and/or depolarize the cell membrane. It therefore contributes to repolarization of the membrane potential. Plays a key role in controlling excitability in a number of systems, such as regulation of the contraction of smooth muscle, the tuning of hair cells in the cochlea, regulation of transmitter release, and innate immunity. In smooth muscles, its activation by high level of Ca(2+), caused by ryanodine receptors in the sarcoplasmic reticulum, regulates the membrane potential. In cochlea cells, its number and kinetic properties partly determine the characteristic frequency of each hair cell and thereby helps to establish a tonotopic map. Kinetics of KCNMA1 channels are determined by alternative splicing, phosphorylation status and its combination with modulating beta subunits. Highly sensitive to both iberiotoxin (IbTx) and charybdotoxin (CTX). This is Calcium-activated potassium channel subunit alpha-1 (KCNMA1) from Canis lupus familiaris (Dog).